A 429-amino-acid polypeptide reads, in one-letter code: Trigger factor (429 aa).

The PPIase FKBP-type domain maps to 164 to 249 (GDTAVIDFEG…VKEVKTKVLP (86 aa)).

This sequence belongs to the FKBP-type PPIase family. Tig subfamily.

The protein resides in the cytoplasm. The catalysed reaction is [protein]-peptidylproline (omega=180) = [protein]-peptidylproline (omega=0). Functionally, involved in protein export. Acts as a chaperone by maintaining the newly synthesized protein in an open conformation. Functions as a peptidyl-prolyl cis-trans isomerase. The sequence is that of Trigger factor from Lysinibacillus sphaericus (strain C3-41).